A 202-amino-acid polypeptide reads, in one-letter code: Casparian strip membrane protein 1 (202 aa).

The Cytoplasmic portion of the chain corresponds to 1–42; sequence MEKNKSTAIEIAESSKESKGKAPLLAAAVGHDRAAGYKRGVS. A helical transmembrane segment spans residues 43 to 63; the sequence is IFDLFLRISAATAALAATIVM. At 64–90 the chain is on the extracellular side; sequence GTTEQTLPFFTQFFQFRAQYDDLPTFT. The helical transmembrane segment at 91-111 threads the bilayer; that stretch reads FFVVGMAIVTGYLILSVPFSI. Over 112–130 the chain is Cytoplasmic; it reads VCIARPVAIGPRFLLIVGD. The chain crosses the membrane as a helical span at residues 131-151; it reads TLKAVLATSAAGSSAAIVYLA. Topologically, residues 152–173 are extracellular; the sequence is HNGNSDANWLDICQQFNDFCQR. A helical membrane pass occupies residues 174-194; the sequence is VSGAVVAAFVAVVLLIFLIVL. The Cytoplasmic portion of the chain corresponds to 195 to 202; it reads SAMALRKN.

This sequence belongs to the Casparian strip membrane proteins (CASP) family. In terms of assembly, homodimer and heterodimers.

It is found in the cell membrane. Regulates membrane-cell wall junctions and localized cell wall deposition. Required for establishment of the Casparian strip membrane domain (CSD) and the subsequent formation of Casparian strips, a cell wall modification of the root endodermis that determines an apoplastic barrier between the intraorganismal apoplasm and the extraorganismal apoplasm and prevents lateral diffusion. The sequence is that of Casparian strip membrane protein 1 from Striga hermonthica (Purple witchweed).